The sequence spans 345 residues: L-rhamnose-proton symporter (345 aa).

A run of 10 helical transmembrane segments spans residues 4–24 (AITMGILWHLIGAASAACFYA), 38–58 (WSVGGVVSWLILPWVVSALLL), 68–88 (FSAATLLPVFLFGAMWGIGNI), 101–121 (MGIGIAIGITLIVGTLMTPLL), 131–151 (TAGGRMTLLGVFVALVGVAIV), 175–195 (LVLAVLCGVFSAGMSFAMDAA), 214–234 (LPSYVVIMGGGALINLGFCFI), 259–279 (VLLSALGGLMWYLQFFFYAWG), 290–310 (ISWMLHMSFYVLCGGIVGLLL), and 323–343 (VLSLGCVVIIVAANIVGLGMA).

Belongs to the L-rhamnose transporter (TC 2.A.7.6) family.

Its subcellular location is the cell inner membrane. The enzyme catalyses L-rhamnopyranose(in) + H(+)(in) = L-rhamnopyranose(out) + H(+)(out). In terms of biological role, uptake of L-rhamnose across the cytoplasmic membrane with the concomitant transport of protons into the cell (symport system). The sequence is that of L-rhamnose-proton symporter from Cronobacter sakazakii (strain ATCC BAA-894) (Enterobacter sakazakii).